Reading from the N-terminus, the 573-residue chain is ATP-dependent RNA helicase RhlB (573 aa).

Residues Val-9–Ala-37 carry the Q motif motif. The Helicase ATP-binding domain occupies Leu-40–Leu-220. Residue Ala-53–Thr-60 coordinates ATP. Positions Asp-166–Asp-169 match the DEAD box motif. Residues Arg-231–Leu-393 enclose the Helicase C-terminal domain. Residues Thr-391 to Ser-560 form a disordered region. Residues Glu-402–Gly-411 show a composition bias toward acidic residues. Basic and acidic residues predominate over residues Arg-419–Arg-432. Residues Gly-435–Gly-450 show a composition bias toward gly residues. A compositionally biased stretch (basic and acidic residues) spans Gly-451–Pro-462. The span at Pro-484–Ala-499 shows a compositional bias: low complexity. Positions Pro-505–Gly-514 are enriched in basic residues. The segment covering Val-541–Ser-560 has biased composition (low complexity).

It belongs to the DEAD box helicase family. RhlB subfamily. As to quaternary structure, component of the RNA degradosome, which is a multiprotein complex involved in RNA processing and mRNA degradation.

It localises to the cytoplasm. The enzyme catalyses ATP + H2O = ADP + phosphate + H(+). Its function is as follows. DEAD-box RNA helicase involved in RNA degradation. Has RNA-dependent ATPase activity and unwinds double-stranded RNA. This chain is ATP-dependent RNA helicase RhlB, found in Xanthomonas euvesicatoria pv. vesicatoria (strain 85-10) (Xanthomonas campestris pv. vesicatoria).